The following is a 185-amino-acid chain: Putative manganese efflux pump MntP (185 aa).

6 consecutive transmembrane segments (helical) span residues 3–23 (IFTL…VSLA), 40–60 (LLFV…VSVI), 64–84 (FDAY…LRMI), 102–122 (TFSR…AVGI), 124–144 (LSLA…FVLI), and 165–185 (EIFG…DAMM).

It belongs to the MntP (TC 9.B.29) family.

Its subcellular location is the cell inner membrane. Probably functions as a manganese efflux pump. In Elusimicrobium minutum (strain Pei191), this protein is Putative manganese efflux pump MntP.